Reading from the N-terminus, the 282-residue chain is UPF0759 protein YunF (282 aa).

This sequence belongs to the UPF0759 family.

The polypeptide is UPF0759 protein YunF (yunF) (Bacillus subtilis (strain 168)).